The following is an 864-amino-acid chain: Mitochondrial 15S rRNA processing factor CCM1 (864 aa).

The N-terminal 76 residues, M1–R76, are a transit peptide targeting the mitochondrion. PPR repeat units follow at residues N319–H353 and D356–P390.

The protein belongs to the CCM1 family. In terms of assembly, binds to mitochondrial small subunit 15S rRNA.

Its subcellular location is the mitochondrion. Functionally, regulates mitochondrial small subunit maturation by controlling 15S rRNA 5'-end processing. Localizes to the 5' precursor of the 15S rRNA in a position that is subsequently occupied by mS47 in the mature yeast mtSSU. Uses structure and sequence-specific RNA recognition, binding to a single-stranded region of the precursor and specifically recognizing bases -6 to -1. The exchange of Ccm1 for mS47 is coupled to the irreversible removal of precursor rRNA that is accompanied by conformational changes of the mitoribosomal proteins uS5m and mS26. These conformational changes signal completion of 5'-end rRNA processing through protection of the mature 5'-end of the 15S rRNA and stabilization of mS47. The removal of the 5' precursor together with the dissociation of Ccm1 may be catalyzed by the 5'-3' exoribonuclease Pet127. Involved in the specific removal of group I introns in mitochondrial encoded transcripts. The polypeptide is Mitochondrial 15S rRNA processing factor CCM1 (CCM1) (Saccharomyces cerevisiae (strain RM11-1a) (Baker's yeast)).